The sequence spans 116 residues: Flagellar transcriptional regulator FlhD (116 aa).

It belongs to the FlhD family. In terms of assembly, homodimer; disulfide-linked. Forms a heterohexamer composed of two FlhC and four FlhD subunits. Each FlhC binds a FlhD dimer, forming a heterotrimer, and a hexamer assembles by dimerization of two heterotrimers.

It localises to the cytoplasm. Functions in complex with FlhC as a master transcriptional regulator that regulates transcription of several flagellar and non-flagellar operons by binding to their promoter region. Activates expression of class 2 flagellar genes, including fliA, which is a flagellum-specific sigma factor that turns on the class 3 genes. Also regulates genes whose products function in a variety of physiological pathways. This chain is Flagellar transcriptional regulator FlhD, found in Yersinia pseudotuberculosis serotype O:1b (strain IP 31758).